The chain runs to 1099 residues: Sodium/potassium/calcium exchanger 1 (1099 aa).

Residues 1–452 (MGKLIRMGPQ…DLFSVEERRQ (452 aa)) lie on the Extracellular side of the membrane. Residues 123-134 (PTTTKNNYSPTA) are compositionally biased toward polar residues. Disordered regions lie at residues 123-150 (PTTT…SSRT), 169-199 (TPRG…RVGT), and 284-304 (PRRV…KSNP). N290 carries N-linked (GlcNAc...) asparagine glycosylation. A helical transmembrane segment spans residues 453–473 (GWVVLHVFGMMYVFVALAIVC). At 474-497 (DEYFVPALGVITDKLQISEDVAGA) the chain is on the cytoplasmic side. The stretch at 494 to 534 (VAGATFMAAGGSAPELFTSLIGVFISHSNVGIGTIVGSAVF) is one Alpha-1 repeat. Residues 498–518 (TFMAAGGSAPELFTSLIGVFI) traverse the membrane as a helical segment. At 519-522 (SHSN) the chain is on the extracellular side. The helical transmembrane segment at 523–543 (VGIGTIVGSAVFNILFVIGTC) threads the bilayer. Residues 544–563 (SLFSREILNLTWWPLFRDVS) lie on the Cytoplasmic side of the membrane. A helical transmembrane segment spans residues 564 to 584 (FYILDLIMLILFFLDSLIAWW). Residue E585 is a topological domain, extracellular. A helical membrane pass occupies residues 586–606 (SLLLLLAYAFYVFTMKWNKHI). At 607-907 (EVWVKEQLSR…SLDWPETRQK (301 aa)) the chain is on the cytoplasmic side. At S658 the chain carries Phosphoserine. Residues 690-901 (EKEEESLNQG…GNEEPLSLDW (212 aa)) form a disordered region. A Phosphothreonine modification is found at T724. Over residues 757–769 (PGEEGETAGEGET) the composition is skewed to acidic residues. 2 stretches are compositionally biased toward basic and acidic residues: residues 813-825 (EIHA…KGNE) and 835-849 (AENH…KGVE). Over residues 857–892 (GDSEEEEEEEEEQEEEEEEEEQEEEEEEEEEEEEKG) the composition is skewed to acidic residues. The chain crosses the membrane as a helical span at residues 908–928 (QAIYLFLLPIVFPLWLTVPDV). Residues 929–935 (RRQESRK) lie on the Extracellular side of the membrane. Residues 936–956 (FFVFTFLGSIMWIAMFSYLMV) form a helical membrane-spanning segment. Residues 957–971 (WWAHQVGETIGISEE) lie on the Cytoplasmic side of the membrane. The helical transmembrane segment at 972 to 992 (IMGLTILAAGTSIPDLITSVI) threads the bilayer. The stretch at 979–1010 (AAGTSIPDLITSVIVARKGLGDMAVSSSVGSN) is one Alpha-2 repeat. The Extracellular segment spans residues 993 to 1010 (VARKGLGDMAVSSSVGSN). The chain crosses the membrane as a helical span at residues 1011 to 1031 (IFDITVGLPVPWLLFSLINGL). The Cytoplasmic segment spans residues 1032–1039 (QPVPVSSN). Residues 1040 to 1060 (GLFCAIVLLFLMLLFVISSIA) traverse the membrane as a helical segment. At 1061 to 1068 (SCKWRMNK) the chain is on the extracellular side. Residues 1069 to 1089 (ILGFTMFLLYFVFLIISVMLE) traverse the membrane as a helical segment. Topologically, residues 1090-1099 (DRIISCPVSV) are cytoplasmic.

It belongs to the Ca(2+):cation antiporter (CaCA) (TC 2.A.19) family. SLC24A subfamily. In terms of processing, the uncleaved signal sequence is required for efficient membrane targeting and proper membrane integration. Expressed in the retina, particularly in the inner segment, outer and inner nuclear layers, and ganglion cell layer.

It localises to the cell membrane. The enzyme catalyses Ca(2+)(out) + K(+)(out) + 4 Na(+)(in) = Ca(2+)(in) + K(+)(in) + 4 Na(+)(out). In terms of biological role, calcium, potassium:sodium antiporter that transports 1 Ca(2+) and 1 K(+) in exchange for 4 Na(+). Critical component of the visual transduction cascade, controlling the calcium concentration of outer segments during light and darkness. Light causes a rapid lowering of cytosolic free calcium in the outer segment of both retinal rod and cone photoreceptors and the light-induced lowering of calcium is caused by extrusion via this protein which plays a key role in the process of light adaptation. The protein is Sodium/potassium/calcium exchanger 1 of Homo sapiens (Human).